The chain runs to 377 residues: Hsc70-interacting protein 2 (377 aa).

The interval 68 to 123 (AKANEPANAPEDSEDEKSLSDPESDVELDMEGVIEADSDPAQPMGNYSKKATEEEV) is disordered. Phosphoserine is present on Ser80. The span at 89–105 (PESDVELDMEGVIEADS) shows a compositional bias: acidic residues. TPR repeat units lie at residues 126 to 159 (ASEL…SPGN), 161 to 193 (LFHA…NSDL), and 195 to 227 (AGYK…DFDE). The stretch at 239 to 276 (NAKKIEQHRLKQERRQAERKIKERQRDQRRARKEQEKH) forms a coiled coil. Residues 243–277 (IEQHRLKQERRQAERKIKERQRDQRRARKEQEKHN) show a composition bias toward basic and acidic residues. 2 disordered regions span residues 243-302 (IEQH…DILG) and 344-377 (DVGA…DGLD). Positions 282 to 293 (GSSGEFSGGNPG) are enriched in gly residues. An STI1 domain is found at 294-336 (NGNMSDILGAMSDPEVSAAIQDILSNPGNITKYASNPKIYNLI). Basic and acidic residues predominate over residues 355-369 (KAGKPSEPKPKKDSA).

It belongs to the FAM10 family. As to quaternary structure, homotetramer. Interacts with Hsc70 as well as DNAJ homologs and Hsp90.

It localises to the cytoplasm. Functionally, one HIP oligomer binds the ATPase domains of at least two Hsc70 molecules dependent on activation of the Hsc70 ATPase by Hsp40. Stabilizes the ADP state of Hsc70 that has a high affinity for substrate protein. Through its own chaperone activity, it may contribute to the interaction of Hsc70 with various target proteins. In Drosophila melanogaster (Fruit fly), this protein is Hsc70-interacting protein 2.